The sequence spans 1281 residues: Zinc finger transcription factor Trps1 (1281 aa).

Disordered stretches follow at residues 1–101 (MVRK…VSFP) and 116–204 (PAAG…KGDL). Polar residues-rich tracts occupy residues 21–31 (LEPTATESKVS) and 40–49 (DQMSENTDQS). A Glycyl lysine isopeptide (Lys-Gly) (interchain with G-Cter in SUMO2) cross-link involves residue Lys29. Phosphoserine is present on residues Ser90 and Ser127. A compositionally biased stretch (basic and acidic residues) spans 148–162 (LETKEEHKMSPKATE). Residues 166–189 (PVQSGQANCQGLSPVSVASKNPQV) show a composition bias toward polar residues. Phosphoserine is present on residues Ser178 and Ser216. The C2H2-type 1; atypical zinc-finger motif lies at 222 to 247 (FKCNICGYGYYGNDPTDLIKHFRKYH). Lys263 participates in a covalent cross-link: Glycyl lysine isopeptide (Lys-Gly) (interchain with G-Cter in SUMO2). The C2H2-type 2; atypical zinc finger occupies 333 to 358 (FRCKFCNFTYMGNSSTELEQHFLQTH). A disordered region spans residues 365-393 (SLPSSEGVKPSEKNSNKSIPALRASDSGD). Residues Lys418, Lys457, Lys474, and Lys488 each participate in a glycyl lysine isopeptide (Lys-Gly) (interchain with G-Cter in SUMO2) cross-link. Positions 484–515 (NDLAKSVEGEPLTKPEKGLSGAKKKDFPSKGA) are disordered. Basic and acidic residues predominate over residues 488-515 (KSVEGEPLTKPEKGLSGAKKKDFPSKGA). Residues 614–637 (HQCHQCSFSTPDVDVLLFHYETVH) form a C2H2-type 3; atypical zinc finger. Positions 635-819 (TVHESQASDV…SLGLLTPVSS (185 aa)) are mediates interaction with GLI3. Residue Lys645 forms a Glycyl lysine isopeptide (Lys-Gly) (interchain with G-Cter in SUMO2) linkage. C2H2-type zinc fingers lie at residues 666 to 689 (HSCT…RRAH) and 692 to 715 (YKCR…NTVH). Glycyl lysine isopeptide (Lys-Gly) (interchain with G-Cter in SUMO2) cross-links involve residues Lys737 and Lys755. A Glycyl lysine isopeptide (Lys-Gly) (interchain with G-Cter in SUMO1); alternate cross-link involves residue Lys766. Lys766 is covalently cross-linked (Glycyl lysine isopeptide (Lys-Gly) (interchain with G-Cter in SUMO2); alternate). Residues Lys825 and Lys850 each participate in a glycyl lysine isopeptide (Lys-Gly) (interchain with G-Cter in SUMO2) cross-link. Positions 856–885 (APAGSEKSASLTQQYPASGESKTKDESQSL) are disordered. A compositionally biased stretch (polar residues) spans 862 to 871 (KSASLTQQYP). Residues Lys877 and Lys879 each participate in a glycyl lysine isopeptide (Lys-Gly) (interchain with G-Cter in SUMO2) cross-link. The GATA-type zinc-finger motif lies at 896 to 920 (CANCLTTKTSLWRKNANGGYVCNAC). Residues Lys925, Lys937, and Lys965 each participate in a glycyl lysine isopeptide (Lys-Gly) (interchain with G-Cter in SUMO2) cross-link. Residues 961–977 (EQLNKQQRGSGEEQVNG) are compositionally biased toward polar residues. The interval 961 to 1000 (EQLNKQQRGSGEEQVNGSPLERRSEDHLSESHPREIPLPS) is disordered. Ser978 is subject to Phosphoserine. Over residues 980-995 (LERRSEDHLSESHPRE) the composition is skewed to basic and acidic residues. The tract at residues 985–1184 (EDHLSESHPR…PTANGASKEK (200 aa)) is mediates interaction with RNF4. Glycyl lysine isopeptide (Lys-Gly) (interchain with G-Cter in SUMO2) cross-links involve residues Lys1003, Lys1012, Lys1030, and Lys1040. The span at 1040–1049 (KSPQESTGDP) shows a compositional bias: polar residues. Residues 1040 to 1078 (KSPQESTGDPGNSSSVSDGKGSSERGSPIEKYMRPAKHP) form a disordered region. Ser1041 bears the Phosphoserine mark. The span at 1050-1059 (GNSSSVSDGK) shows a compositional bias: low complexity. The segment covering 1060-1072 (GSSERGSPIEKYM) has biased composition (basic and acidic residues). At Ser1066 the chain carries Phosphoserine. Residue Lys1070 forms a Glycyl lysine isopeptide (Lys-Gly) (interchain with G-Cter in SUMO2) linkage. Ser1085 is modified (phosphoserine). The segment at 1163 to 1281 (PLDLAIKHSR…QAEKNGKPKE (119 aa)) is transcriptional repressor domain. A disordered region spans residues 1169-1195 (KHSRPGPTANGASKEKTKAPPTVKNED). Glycyl lysine isopeptide (Lys-Gly) (interchain with G-Cter in SUMO2); alternate cross-links involve residues Lys1192 and Lys1201. Residues Lys1192 and Lys1201 each participate in a glycyl lysine isopeptide (Lys-Gly) (interchain with G-Cter in SUMO); alternate cross-link. Lys1201 is covalently cross-linked (Glycyl lysine isopeptide (Lys-Gly) (interchain with G-Cter in SUMO1); alternate). 2 C2H2-type zinc fingers span residues 1215-1237 (TKCV…MSCH) and 1243-1267 (FQCS…RGLH).

In terms of assembly, interacts with RNF4; regulates TRPS1 repressor activity. Interacts specifically with the activator form of GLI3 (GLI3A) but not with the repressor form (GLI3R). Sumoylated. Sumoylation in the repressor domain inhibits the transcription repression activity. Sumoylation on Lys-1201 is the major site. Appears to be sumoylated on multiple sites. In the embryo, expression is detected in both visceral and skeletal tissues. Found in the maxilla, mandible, snout, prospective phalanges and in the femoral head within the developing hip. Also expressed in the hair follicles.

It is found in the nucleus. In terms of biological role, transcriptional repressor. Binds specifically to GATA sequences and represses expression of GATA-regulated genes at selected sites and stages in vertebrate development. Regulates chondrocyte proliferation and differentiation. Executes multiple functions in proliferating chondrocytes, expanding the region of distal chondrocytes, activating proliferation in columnar cells and supporting the differentiation of columnar into hypertrophic chondrocytes. This Mus musculus (Mouse) protein is Zinc finger transcription factor Trps1 (Trps1).